The sequence spans 337 residues: Putative 2-aminoethylphosphonate-binding periplasmic protein (337 aa).

Positions 1-21 (MKLSRLALLSVFALASAPSWA) are cleaved as a signal peptide.

The protein belongs to the bacterial solute-binding protein 1 family.

The protein localises to the periplasm. Functionally, probably part of the PhnSTUV complex (TC 3.A.1.11.5) involved in 2-aminoethylphosphonate import. The polypeptide is Putative 2-aminoethylphosphonate-binding periplasmic protein (phnS) (Salmonella typhimurium (strain LT2 / SGSC1412 / ATCC 700720)).